A 125-amino-acid polypeptide reads, in one-letter code: Large ribosomal subunit protein bL12 (125 aa).

The protein belongs to the bacterial ribosomal protein bL12 family. As to quaternary structure, homodimer. Part of the ribosomal stalk of the 50S ribosomal subunit. Forms a multimeric L10(L12)X complex, where L10 forms an elongated spine to which 2 to 4 L12 dimers bind in a sequential fashion. Binds GTP-bound translation factors.

In terms of biological role, forms part of the ribosomal stalk which helps the ribosome interact with GTP-bound translation factors. Is thus essential for accurate translation. This Helicobacter pylori (strain P12) protein is Large ribosomal subunit protein bL12.